A 239-amino-acid polypeptide reads, in one-letter code: Type III pantothenate kinase (239 aa).

6–13 (DAGNTRLK) lines the ATP pocket. Substrate-binding positions include Tyr-87 and 94–97 (GADR). Asp-96 (proton acceptor) is an active-site residue. ATP is bound at residue Thr-119. Ser-169 contributes to the substrate binding site.

This sequence belongs to the type III pantothenate kinase family. Homodimer. NH4(+) serves as cofactor. It depends on K(+) as a cofactor.

The protein resides in the cytoplasm. It catalyses the reaction (R)-pantothenate + ATP = (R)-4'-phosphopantothenate + ADP + H(+). It participates in cofactor biosynthesis; coenzyme A biosynthesis; CoA from (R)-pantothenate: step 1/5. In terms of biological role, catalyzes the phosphorylation of pantothenate (Pan), the first step in CoA biosynthesis. This chain is Type III pantothenate kinase, found in Laribacter hongkongensis (strain HLHK9).